An 875-amino-acid chain; its full sequence is Alanine--tRNA ligase (875 aa).

Positions 564, 568, 666, and 670 each coordinate Zn(2+).

The protein belongs to the class-II aminoacyl-tRNA synthetase family. It depends on Zn(2+) as a cofactor.

Its subcellular location is the cytoplasm. It catalyses the reaction tRNA(Ala) + L-alanine + ATP = L-alanyl-tRNA(Ala) + AMP + diphosphate. In terms of biological role, catalyzes the attachment of alanine to tRNA(Ala) in a two-step reaction: alanine is first activated by ATP to form Ala-AMP and then transferred to the acceptor end of tRNA(Ala). Also edits incorrectly charged Ser-tRNA(Ala) and Gly-tRNA(Ala) via its editing domain. The sequence is that of Alanine--tRNA ligase from Mannheimia succiniciproducens (strain KCTC 0769BP / MBEL55E).